A 184-amino-acid chain; its full sequence is NADH-quinone oxidoreductase subunit J (184 aa).

The chain crosses the membrane as a helical span at residues 1–21; that stretch reads MEFAFYICGLIAILATLRVIT. The Cytoplasmic segment spans residues 22–27; the sequence is HTNPVH. Residues 28-48 traverse the membrane as a helical segment; sequence ALLYLIISLLAISGVFFSLGA. At 49 to 53 the chain is on the periplasmic side; it reads YFAGA. The helical transmembrane segment at 54 to 74 threads the bilayer; it reads LEIIVYAGAIMVLFVFVVMML. Residues 75–91 lie on the Cytoplasmic side of the membrane; sequence NLGGSEIEQERQWLKPQ. Residues 92–112 form a helical membrane-spanning segment; that stretch reads VWIGPAILSAIMLVVIVYAIL. Over 113 to 137 the chain is Periplasmic; it reads GVNDQGIDGTPISAKAVGITLFGPY. The chain crosses the membrane as a helical span at residues 138 to 158; sequence VLAVELASMLLLAGLVVAFHV. Residues 159-184 lie on the Cytoplasmic side of the membrane; the sequence is GREERAGEVLSNRKDDSAKRKTEEHA.

The protein belongs to the complex I subunit 6 family. In terms of assembly, composed of 13 different subunits. Subunits NuoA, H, J, K, L, M, N constitute the membrane sector of the complex.

The protein localises to the cell inner membrane. It catalyses the reaction a quinone + NADH + 5 H(+)(in) = a quinol + NAD(+) + 4 H(+)(out). NDH-1 shuttles electrons from NADH, via FMN and iron-sulfur (Fe-S) centers, to quinones in the respiratory chain. The immediate electron acceptor for the enzyme in this species is believed to be ubiquinone. Couples the redox reaction to proton translocation (for every two electrons transferred, four hydrogen ions are translocated across the cytoplasmic membrane), and thus conserves the redox energy in a proton gradient. The polypeptide is NADH-quinone oxidoreductase subunit J (nuoJ) (Escherichia coli O157:H7).